We begin with the raw amino-acid sequence, 255 residues long: Isoprenyl transferase (255 aa).

Aspartate 35 is an active-site residue. Position 35 (aspartate 35) interacts with Mg(2+). Substrate-binding positions include 36-39 (GNGR), tryptophan 40, arginine 48, histidine 52, and 80-82 (STE). The active-site Proton acceptor is the asparagine 83. Residues tryptophan 84, arginine 86, arginine 203, and 209–211 (RIS) contribute to the substrate site. Glutamate 222 is a binding site for Mg(2+).

This sequence belongs to the UPP synthase family. As to quaternary structure, homodimer. Mg(2+) serves as cofactor.

In terms of biological role, catalyzes the condensation of isopentenyl diphosphate (IPP) with allylic pyrophosphates generating different type of terpenoids. The polypeptide is Isoprenyl transferase (Clostridium tetani (strain Massachusetts / E88)).